A 425-amino-acid polypeptide reads, in one-letter code: Serine--tRNA ligase (425 aa).

L-serine is bound at residue 230-232; it reads TAE. 261–263 provides a ligand contact to ATP; sequence RSE. L-serine is bound at residue Glu284. 348 to 351 is a binding site for ATP; it reads EISS. Ser384 provides a ligand contact to L-serine.

This sequence belongs to the class-II aminoacyl-tRNA synthetase family. Type-1 seryl-tRNA synthetase subfamily. As to quaternary structure, homodimer. The tRNA molecule binds across the dimer.

Its subcellular location is the cytoplasm. The enzyme catalyses tRNA(Ser) + L-serine + ATP = L-seryl-tRNA(Ser) + AMP + diphosphate + H(+). The catalysed reaction is tRNA(Sec) + L-serine + ATP = L-seryl-tRNA(Sec) + AMP + diphosphate + H(+). It participates in aminoacyl-tRNA biosynthesis; selenocysteinyl-tRNA(Sec) biosynthesis; L-seryl-tRNA(Sec) from L-serine and tRNA(Sec): step 1/1. Functionally, catalyzes the attachment of serine to tRNA(Ser). Is also able to aminoacylate tRNA(Sec) with serine, to form the misacylated tRNA L-seryl-tRNA(Sec), which will be further converted into selenocysteinyl-tRNA(Sec). The chain is Serine--tRNA ligase from Streptococcus equi subsp. equi (strain 4047).